The chain runs to 1280 residues: MSRAHAAYANEGWSAPEGGIAGKDGSTRDCSGYGSQGPLFSAEEEVKGTVVRETVGPIEIFRYADATDRVLMIAGTAFAVACGAGMPVFSFIFGRIAMDLMSGVGSAEEKAAKTSLIMVYVGIAMLIACAGHVMCWTVAACRQVARIRLLFFRAVLRQDIGWHDEHSPGALTARMTGDTRVIQNGINDKLSQGIMNGSMGVIGYIAGFVFSWELTLMMIGMMPFIIVMAAIIGSIVSKITESSRKYFAKAGSLATEVMENIRTVQAFGREDYELERFTKAVLYAQGRGIRKELASNLSAAVIMALMYVSYTVAFFFGSYLVEWGRRDMADIISTFLAVLMGSFGLGFVAPSRTAFTESRAAAYEIFKAIDRVPPVDIDAGGVPVPGFKESIEFRNVRFAYPTRPGMILFRDLSLKIKCGQKVAFSGASGCGKSSVIGLIQRFYDPIGGAVLVDGVRMRELCLREWRDQIGIVSQEPNLFAGTMMENVRMGKPNATDEEVVEACRQANIHDTIMALPDRYDTPVGPVGSLLSGGQKQRIAIARALVKRPPILLLDEATSALDRKSEMEVQAALDQLIQRGGTTVVVIAHRLATIRDMDRIYYVKHDGAEGSRITESGTFDELLELDGEFAAVAKMQGVLAGDAKSGASVRDAKKASGHLGVILDEADLAQLDEDVPRTARQNVPIDELAKWEVKHAKVGFLRLMRMNKDKAWAVALGILSSVVIGSARPASSIVMGHMLRVLGEYSATKDVEALRSGTNLYAPLFIVFAVANFSGWILHGFYGYAGEHLTTKIRVLLFRQIMRQDINFFDIPGRDAGTLAGMLSGDCEAVHQLWGPSIGLKVQTMCIIASGLVVGFIYQWKLALVALACMPLMIGCSLTRRLMINGYTKSREGDTDDTIVTEALSNVRTVTSLNMKEDCVEAFQAALREEAPRSVRKGIIAGGIYGITQFIFYGVYALCFWYGSKLIDKGEAEFKDVMIASMSILFGAQNAGEAGAFATKLADAEASAKRVFSVIDRVPDVDIEQAGNKDLGEGCDIEYRNVQFIYSARPKQVVLASVNMRFGDATSNGLIGQTGCGKSTVIQMLARFYERRSGLISVNGRDLSSLDIAEWRRNISIVLQEPNLFSGTVRENIRYAREGATDEEVEEAARLAHIHHEIIKWTDGYDTEVGYKGRALSGGQKQRIAIARGLLRRPRLLLLDEATSALDSVTEAKVQEGIEAFQAKYKVTTVSIAHRLTTIRHCDQIILLDSGCIIEQGSHEELMALGGEYKTRYDLYMSALS.

Topologically, residues 1–72 (MSRAHAAYAN…YADATDRVLM (72 aa)) are cytoplasmic. In terms of domain architecture, ABC transmembrane type-1 1 spans 72 to 357 (MIAGTAFAVA…VAPSRTAFTE (286 aa)). The next 6 helical transmembrane spans lie at 73–93 (IAGTAFAVACGAGMPVFSFIF), 120–140 (YVGIAMLIACAGHVMCWTVAA), 189–209 (KLSQGIMNGSMGVIGYIAGFV), 216–236 (LMMIGMMPFIIVMAAIIGSIV), 297–317 (LSAAVIMALMYVSYTVAFFFG), and 326–345 (RDMADIISTFLAVLMGSFGL). The Cytoplasmic portion of the chain corresponds to 346 to 712 (GFVAPSRTAF…MRMNKDKAWA (367 aa)). Residues 391-634 (IEFRNVRFAY…DGEFAAVAKM (244 aa)) enclose the ABC transporter 1 domain. Residue 426–433 (GASGCGKS) participates in ATP binding. 6 consecutive transmembrane segments (helical) span residues 713 to 733 (VALGILSSVVIGSARPASSIV), 762 to 781 (PLFIVFAVANFSGWILHGFY), 837 to 857 (IGLKVQTMCIIASGLVVGFIY), 858 to 878 (QWKLALVALACMPLMIGCSLT), 938 to 958 (IIAGGIYGITQFIFYGVYALC), and 976 to 996 (VMIASMSILFGAQNAGEAGAF). The 290-residue stretch at 713-1002 (VALGILSSVV…AGAFATKLAD (290 aa)) folds into the ABC transmembrane type-1 2 domain. An ABC transporter 2 domain is found at 1036–1274 (IEYRNVQFIY…GGEYKTRYDL (239 aa)). Residue 1071–1078 (GQTGCGKS) coordinates ATP. Asparagine 1113 is a glycosylation site (N-linked (GlcNAc...) asparagine).

Belongs to the ABC transporter superfamily. ABCB family. Multidrug resistance exporter (TC 3.A.1.201) subfamily.

The protein localises to the membrane. It carries out the reaction ATP + H2O + xenobioticSide 1 = ADP + phosphate + xenobioticSide 2.. In terms of biological role, energy-dependent efflux pump responsible for decreased drug accumulation in multi-drug-resistant cells. Confers vinblastine resistance. The sequence is that of Multidrug resistance protein 1 (MDR1) from Leishmania enriettii.